Consider the following 76-residue polypeptide: Conotoxin Cl6.4 (76 aa).

The signal sequence occupies residues 1–19 (MTLTFLLVVALCMLTTCHT). A propeptide spanning residues 20 to 47 (ENYRDSQKVSPVRSIGKTQFARSLRLSE) is cleaved from the precursor. Cystine bridges form between Cys50–Cys66, Cys57–Cys70, and Cys65–Cys75.

Expressed by the venom duct.

Its subcellular location is the secreted. The sequence is that of Conotoxin Cl6.4 from Californiconus californicus (California cone).